The chain runs to 90 residues: Acylphosphatase (90 aa).

Residues 4 to 90 (TVHLRITGHV…KGQYKDFRIY (87 aa)) enclose the Acylphosphatase-like domain. Active-site residues include Arg-19 and Asn-37.

This sequence belongs to the acylphosphatase family.

It catalyses the reaction an acyl phosphate + H2O = a carboxylate + phosphate + H(+). This is Acylphosphatase (acyP) from Caldanaerobacter subterraneus subsp. tengcongensis (strain DSM 15242 / JCM 11007 / NBRC 100824 / MB4) (Thermoanaerobacter tengcongensis).